The following is a 609-amino-acid chain: Dihydroxy-acid dehydratase (609 aa).

Residue D82 coordinates Mg(2+). A [2Fe-2S] cluster-binding site is contributed by C123. Positions 124 and 125 each coordinate Mg(2+). K125 carries the post-translational modification N6-carboxylysine. C192 provides a ligand contact to [2Fe-2S] cluster. Mg(2+) is bound at residue E489. Residue S515 is the Proton acceptor of the active site.

It belongs to the IlvD/Edd family. As to quaternary structure, homodimer. [2Fe-2S] cluster serves as cofactor. It depends on Mg(2+) as a cofactor.

The enzyme catalyses (2R)-2,3-dihydroxy-3-methylbutanoate = 3-methyl-2-oxobutanoate + H2O. It carries out the reaction (2R,3R)-2,3-dihydroxy-3-methylpentanoate = (S)-3-methyl-2-oxopentanoate + H2O. It participates in amino-acid biosynthesis; L-isoleucine biosynthesis; L-isoleucine from 2-oxobutanoate: step 3/4. The protein operates within amino-acid biosynthesis; L-valine biosynthesis; L-valine from pyruvate: step 3/4. In terms of biological role, functions in the biosynthesis of branched-chain amino acids. Catalyzes the dehydration of (2R,3R)-2,3-dihydroxy-3-methylpentanoate (2,3-dihydroxy-3-methylvalerate) into 2-oxo-3-methylpentanoate (2-oxo-3-methylvalerate) and of (2R)-2,3-dihydroxy-3-methylbutanoate (2,3-dihydroxyisovalerate) into 2-oxo-3-methylbutanoate (2-oxoisovalerate), the penultimate precursor to L-isoleucine and L-valine, respectively. In Azobacteroides pseudotrichonymphae genomovar. CFP2, this protein is Dihydroxy-acid dehydratase.